The sequence spans 398 residues: Cytochrome b (398 aa).

A helical membrane pass occupies residues 45–65; the sequence is LGSIAGIALVIQIITGVILAM. H95 and H109 together coordinate heme b. The next 9 membrane-spanning stretches (helical) occupy residues 96 to 116, 129 to 149, 164 to 184, 192 to 212, 245 to 265, 277 to 297, 304 to 324, 339 to 359, and 366 to 386; these read AVGA…GLYY, IGII…VLPW, FSAI…GFSV, FFAL…LHLV, FVGF…APNY, PLVT…YAIL, LGGV…PWLD, IAFW…SKPV, and ISRF…PLIG. 2 residues coordinate heme b: H196 and H210.

This sequence belongs to the cytochrome b family. As to quaternary structure, the main subunits of complex b-c1 are: cytochrome b, cytochrome c1 and the Rieske protein. The cofactor is heme b.

It is found in the cell membrane. Functionally, component of the ubiquinol-cytochrome c reductase complex (complex III or cytochrome b-c1 complex), which is a respiratory chain that generates an electrochemical potential coupled to ATP synthesis. The polypeptide is Cytochrome b (petB) (Rickettsia prowazekii (strain Madrid E)).